A 140-amino-acid chain; its full sequence is Small ribosomal subunit protein uS11 (140 aa).

The disordered stretch occupies residues 116-140 (GRVEDVTPIPHDGTRPKGGRRGRRV).

This sequence belongs to the universal ribosomal protein uS11 family. As to quaternary structure, part of the 30S ribosomal subunit.

Its function is as follows. Located on the platform of the 30S subunit. This chain is Small ribosomal subunit protein uS11, found in Thermococcus kodakarensis (strain ATCC BAA-918 / JCM 12380 / KOD1) (Pyrococcus kodakaraensis (strain KOD1)).